The chain runs to 216 residues: Ras-related protein RABA1a (216 aa).

Residue 20-27 participates in GTP binding; the sequence is GDSGVGKS. The Effector region motif lies at 42–50; the sequence is SKSTIGVEF. GTP contacts are provided by residues 68 to 72, 126 to 129, and 156 to 157; these read DTAGQ, NKCD, and SA. 2 S-geranylgeranyl cysteine lipidation sites follow: C213 and C214.

The protein belongs to the small GTPase superfamily. Rab family.

The protein localises to the cell membrane. Involved in auxin-mediated response. May be involved in vesicle trafficking of components involved in polar auxin transport. Binds GTP and GDP and possesses intrinsic GTPase activity. The polypeptide is Ras-related protein RABA1a (RABA1A) (Arabidopsis thaliana (Mouse-ear cress)).